The following is a 244-amino-acid chain: Protein A47 (244 aa).

This sequence belongs to the orthopoxvirus A47 protein family.

This chain is Protein A47, found in Variola virus.